Reading from the N-terminus, the 262-residue chain is Abhydrolase domain-containing protein AFT2-1 (262 aa).

Positions 260 to 262 match the Peroxisomal targeting signal type 1 motif; that stretch reads SKL.

It belongs to the AB hydrolase superfamily. AKT2 hydrolase family.

It localises to the peroxisome. It participates in mycotoxin biosynthesis. In terms of biological role, abhydrolase domain-containing protein; part of the gene clusters that mediate the biosynthesis of the host-selective toxins (HSTs) AF-toxins responsible for Alternaria black spot of strawberry disease by the strawberry pathotype. AF-toxin I and III are valine derivatives of 2,3-dyhydroxy-isovaleric acid and 2-hydroxy-isovaleric acid respectively, while AF II is an isoleucine derivative of 2-hydroxy-valeric acid. These derivatives are bound to a 9,10-epoxy-8-hydroxy-9-methyl-decatrienoic acid (EDA) moiety. On cellular level, AF-toxins affect plasma membrane of susceptible cells and cause a sudden increase in loss of K(+) after a few minutes of toxin treatment. The aldo-keto reductase AFTS1 catalyzes the conversion of 2-keto-isovaleric acid (2-KIV) to 2-hydroxy-isovaleric acid (2-HIV) by reduction of its ketone to an alcohol. The acyl-CoA ligase AFT1, the hydrolase AFT2 and the enoyl-CoA hydratases AFT3 and AFT6, but also the polyketide synthase AFT9, the acyl-CoA dehydrogenase AFT10, the cytochrome P450 monooxygenase AFT11 and the oxidoreductase AFT12 are all involved in the biosynthesis of the AK-, AF- and ACT-toxin common EDA structural moiety. The exact function of each enzyme, and of additional enzymes identified within the AF-toxin clusters have still to be determined. This chain is Abhydrolase domain-containing protein AFT2-1, found in Alternaria alternata (Alternaria rot fungus).